We begin with the raw amino-acid sequence, 155 residues long: Small ribosomal subunit protein uS7 (155 aa).

This sequence belongs to the universal ribosomal protein uS7 family. Part of the 30S ribosomal subunit. Contacts proteins S9 and S11.

In terms of biological role, one of the primary rRNA binding proteins, it binds directly to 16S rRNA where it nucleates assembly of the head domain of the 30S subunit. Is located at the subunit interface close to the decoding center, probably blocks exit of the E-site tRNA. This is Small ribosomal subunit protein uS7 from Cytophaga hutchinsonii (strain ATCC 33406 / DSM 1761 / CIP 103989 / NBRC 15051 / NCIMB 9469 / D465).